Consider the following 259-residue polypeptide: Deoxyribose-phosphate aldolase (259 aa).

Asp104 (proton donor/acceptor) is an active-site residue. Lys168 (schiff-base intermediate with acetaldehyde) is an active-site residue. Lys200 (proton donor/acceptor) is an active-site residue.

Belongs to the DeoC/FbaB aldolase family. DeoC type 2 subfamily.

Its subcellular location is the cytoplasm. It catalyses the reaction 2-deoxy-D-ribose 5-phosphate = D-glyceraldehyde 3-phosphate + acetaldehyde. The protein operates within carbohydrate degradation; 2-deoxy-D-ribose 1-phosphate degradation; D-glyceraldehyde 3-phosphate and acetaldehyde from 2-deoxy-alpha-D-ribose 1-phosphate: step 2/2. Catalyzes a reversible aldol reaction between acetaldehyde and D-glyceraldehyde 3-phosphate to generate 2-deoxy-D-ribose 5-phosphate. The chain is Deoxyribose-phosphate aldolase from Agrobacterium fabrum (strain C58 / ATCC 33970) (Agrobacterium tumefaciens (strain C58)).